A 189-amino-acid polypeptide reads, in one-letter code: Interferon alpha-8 (189 aa).

The first 23 residues, 1 to 23 (MALTFYLLVALVVLSYKSFSSLG), serve as a signal peptide directing secretion. 2 disulfides stabilise this stretch: Cys-24–Cys-122 and Cys-52–Cys-162.

This sequence belongs to the alpha/beta interferon family.

The protein localises to the secreted. Its function is as follows. Produced by macrophages, IFN-alpha have antiviral activities. Interferon stimulates the production of two enzymes: a protein kinase and an oligoadenylate synthetase. The protein is Interferon alpha-8 (IFNA8) of Homo sapiens (Human).